Reading from the N-terminus, the 346-residue chain is NSSLPTNISGGTPAVSAGYLFLDIITYLVYAVTFVLGVLGNGLVIWVAGFRMTHTVTTISYLNLAVADFCFTSTLPFFMVRKAMGGHWPFGWFLCKFIFTIVDINLFGSVFLIALIALDRCVCVLHPVWTQNHRTVSLAKKVIIGPWVMALLLTLPVIIRVTTVPGKMGTVSCTFNFSPWTNDPKERIKVAIAMLTVRGIIRFIIGFSAPMSIVAVSYGLIATKIHKQGLIKSSRPLRVLSFVAAAFFLCWSPYQVVAFIATVRIRELLQGMYKEISIAVDVTSALAFFNSCLNPMLYVFMGQDFRERLIHSLPASLERALTEASTQTSDTATNSTLPSAEVALQA.

Asparagine 1 and asparagine 7 each carry an N-linked (GlcNAc...) asparagine glycan. The Extracellular portion of the chain corresponds to 1 to 24 (NSSLPTNISGGTPAVSAGYLFLDI). Residues 25–47 (ITYLVYAVTFVLGVLGNGLVIWV) traverse the membrane as a helical segment. Over 48-58 (AGFRMTHTVTT) the chain is Cytoplasmic. The helical transmembrane segment at 59 to 80 (ISYLNLAVADFCFTSTLPFFMV) threads the bilayer. Topologically, residues 81 to 97 (RKAMGGHWPFGWFLCKF) are extracellular. Residues cysteine 95 and cysteine 173 are joined by a disulfide bond. Residues 98-118 (IFTIVDINLFGSVFLIALIAL) form a helical membrane-spanning segment. At 119–137 (DRCVCVLHPVWTQNHRTVS) the chain is on the cytoplasmic side. The helical transmembrane segment at 138-159 (LAKKVIIGPWVMALLLTLPVII) threads the bilayer. Over 160–202 (RVTTVPGKMGTVSCTFNFSPWTNDPKERIKVAIAMLTVRGIIR) the chain is Extracellular. Residues 203–223 (FIIGFSAPMSIVAVSYGLIAT) traverse the membrane as a helical segment. Over 224-239 (KIHKQGLIKSSRPLRV) the chain is Cytoplasmic. A helical transmembrane segment spans residues 240–263 (LSFVAAAFFLCWSPYQVVAFIATV). Residues 264–282 (RIRELLQGMYKEISIAVDV) are Extracellular-facing. The helical transmembrane segment at 283–302 (TSALAFFNSCLNPMLYVFMG) threads the bilayer. Residues 303 to 346 (QDFRERLIHSLPASLERALTEASTQTSDTATNSTLPSAEVALQA) are Cytoplasmic-facing. The span at 324-338 (ASTQTSDTATNSTLP) shows a compositional bias: polar residues. The interval 324 to 346 (ASTQTSDTATNSTLPSAEVALQA) is disordered.

Belongs to the G-protein coupled receptor 1 family. In terms of processing, phosphorylated; which is necessary for desensitization.

Its subcellular location is the cell membrane. Its function is as follows. High affinity receptor for N-formyl-methionyl peptides (fMLP), which are powerful neutrophil chemotactic factors. Binding of fMLP to the receptor stimulates intracellular calcium mobilization and superoxide anion release. This response is mediated via a G-protein that activates a phosphatidylinositol-calcium second messenger system. Receptor for TAFA4, mediates its effects on chemoattracting macrophages, promoting phagocytosis and increasing ROS release. Receptor for cathepsin CTSG, leading to increased phagocyte chemotaxis. This Pongo pygmaeus (Bornean orangutan) protein is fMet-Leu-Phe receptor (FPR1).